We begin with the raw amino-acid sequence, 131 residues long: Protein SOB FIVE-LIKE 4 (131 aa).

Disordered stretches follow at residues 1-21 and 40-131; these read MDKE…SSPI and IYNY…YRMK. Polar residues predominate over residues 8–18; sequence SSESGWTTYLS. The short motif at 11-16 is the SOFL-A element; sequence SGWTTY. Positions 46-58 are enriched in basic and acidic residues; sequence KVEHEEERNKDSD. An SOFL-B motif is present at residues 60–69; that stretch reads SMASDASSGP. The span at 79–109 shows a compositional bias: basic and acidic residues; the sequence is KALDLKNGKNEGNSKSKNDDDHHNHYHDGKK. Positions 107–114 match the Nuclear localization signal motif; the sequence is GKKTSNSY. Positions 114–131 are enriched in basic residues; the sequence is YRKKDKKKRENKSTYRMK.

The protein belongs to the SOFL plant protein family. As to expression, expressed, at low levels, in seedlings, roots, flowers and siliques.

It localises to the cytoplasm. The protein resides in the nucleus. Its function is as follows. Involved in cytokinin-mediated development. The polypeptide is Protein SOB FIVE-LIKE 4 (Arabidopsis thaliana (Mouse-ear cress)).